We begin with the raw amino-acid sequence, 435 residues long: Serine--tRNA ligase (435 aa).

Residue 238–240 participates in L-serine binding; sequence TAE. 269–271 contributes to the ATP binding site; the sequence is RKE. Residue Glu-292 participates in L-serine binding. 356–359 provides a ligand contact to ATP; the sequence is EISS. Ser-391 provides a ligand contact to L-serine.

It belongs to the class-II aminoacyl-tRNA synthetase family. Type-1 seryl-tRNA synthetase subfamily. As to quaternary structure, homodimer. The tRNA molecule binds across the dimer.

The protein resides in the cytoplasm. The enzyme catalyses tRNA(Ser) + L-serine + ATP = L-seryl-tRNA(Ser) + AMP + diphosphate + H(+). The catalysed reaction is tRNA(Sec) + L-serine + ATP = L-seryl-tRNA(Sec) + AMP + diphosphate + H(+). It participates in aminoacyl-tRNA biosynthesis; selenocysteinyl-tRNA(Sec) biosynthesis; L-seryl-tRNA(Sec) from L-serine and tRNA(Sec): step 1/1. In terms of biological role, catalyzes the attachment of serine to tRNA(Ser). Is also able to aminoacylate tRNA(Sec) with serine, to form the misacylated tRNA L-seryl-tRNA(Sec), which will be further converted into selenocysteinyl-tRNA(Sec). The chain is Serine--tRNA ligase from Leuconostoc mesenteroides subsp. mesenteroides (strain ATCC 8293 / DSM 20343 / BCRC 11652 / CCM 1803 / JCM 6124 / NCDO 523 / NBRC 100496 / NCIMB 8023 / NCTC 12954 / NRRL B-1118 / 37Y).